The following is a 188-amino-acid chain: Phosphoheptose isomerase (188 aa).

Residues 33–188 (VTASLRAGGK…CGLVEDALCS (156 aa)) enclose the SIS domain. Position 48 to 50 (48 to 50 (NGG)) interacts with substrate. Residues H57 and E61 each coordinate Zn(2+). Substrate-binding positions include E61, 90-91 (ND), 116-118 (STS), S121, and Q168. Residues Q168 and H176 each contribute to the Zn(2+) site.

The protein belongs to the SIS family. GmhA subfamily. Homotetramer. Zn(2+) serves as cofactor.

The protein localises to the cytoplasm. It catalyses the reaction 2 D-sedoheptulose 7-phosphate = D-glycero-alpha-D-manno-heptose 7-phosphate + D-glycero-beta-D-manno-heptose 7-phosphate. It functions in the pathway carbohydrate biosynthesis; D-glycero-D-manno-heptose 7-phosphate biosynthesis; D-glycero-alpha-D-manno-heptose 7-phosphate and D-glycero-beta-D-manno-heptose 7-phosphate from sedoheptulose 7-phosphate: step 1/1. Functionally, catalyzes the isomerization of sedoheptulose 7-phosphate in D-glycero-D-manno-heptose 7-phosphate. The sequence is that of Phosphoheptose isomerase from Rhodospirillum rubrum (strain ATCC 11170 / ATH 1.1.1 / DSM 467 / LMG 4362 / NCIMB 8255 / S1).